Consider the following 620-residue polypeptide: Proline--tRNA ligase (620 aa).

Belongs to the class-II aminoacyl-tRNA synthetase family. ProS type 1 subfamily. As to quaternary structure, homodimer.

Its subcellular location is the cytoplasm. The catalysed reaction is tRNA(Pro) + L-proline + ATP = L-prolyl-tRNA(Pro) + AMP + diphosphate. In terms of biological role, catalyzes the attachment of proline to tRNA(Pro) in a two-step reaction: proline is first activated by ATP to form Pro-AMP and then transferred to the acceptor end of tRNA(Pro). As ProRS can inadvertently accommodate and process non-cognate amino acids such as alanine and cysteine, to avoid such errors it has two additional distinct editing activities against alanine. One activity is designated as 'pretransfer' editing and involves the tRNA(Pro)-independent hydrolysis of activated Ala-AMP. The other activity is designated 'posttransfer' editing and involves deacylation of mischarged Ala-tRNA(Pro). The misacylated Cys-tRNA(Pro) is not edited by ProRS. The sequence is that of Proline--tRNA ligase from Streptococcus thermophilus (strain CNRZ 1066).